A 182-amino-acid chain; its full sequence is uncharacterized protein (182 aa).

This is an uncharacterized protein from Mycobacterium tuberculosis (strain CDC 1551 / Oshkosh).